A 367-amino-acid chain; its full sequence is UDP-N-acetylglucosamine--N-acetylmuramyl-(pentapeptide) pyrophosphoryl-undecaprenol N-acetylglucosamine transferase (367 aa).

UDP-N-acetyl-alpha-D-glucosamine-binding positions include 11–13 (TAG), N125, R163, S197, and Q289.

It belongs to the glycosyltransferase 28 family. MurG subfamily.

Its subcellular location is the cell membrane. The enzyme catalyses di-trans,octa-cis-undecaprenyl diphospho-N-acetyl-alpha-D-muramoyl-L-alanyl-D-glutamyl-meso-2,6-diaminopimeloyl-D-alanyl-D-alanine + UDP-N-acetyl-alpha-D-glucosamine = di-trans,octa-cis-undecaprenyl diphospho-[N-acetyl-alpha-D-glucosaminyl-(1-&gt;4)]-N-acetyl-alpha-D-muramoyl-L-alanyl-D-glutamyl-meso-2,6-diaminopimeloyl-D-alanyl-D-alanine + UDP + H(+). It participates in cell wall biogenesis; peptidoglycan biosynthesis. Cell wall formation. Catalyzes the transfer of a GlcNAc subunit on undecaprenyl-pyrophosphoryl-MurNAc-pentapeptide (lipid intermediate I) to form undecaprenyl-pyrophosphoryl-MurNAc-(pentapeptide)GlcNAc (lipid intermediate II). This is UDP-N-acetylglucosamine--N-acetylmuramyl-(pentapeptide) pyrophosphoryl-undecaprenol N-acetylglucosamine transferase from Clavibacter michiganensis subsp. michiganensis (strain NCPPB 382).